The following is a 185-amino-acid chain: Ribosome-recycling factor (185 aa).

Belongs to the RRF family.

It localises to the cytoplasm. Functionally, responsible for the release of ribosomes from messenger RNA at the termination of protein biosynthesis. May increase the efficiency of translation by recycling ribosomes from one round of translation to another. This chain is Ribosome-recycling factor, found in Streptococcus mutans serotype c (strain ATCC 700610 / UA159).